The following is a 553-amino-acid chain: Hydroxylamine reductase (553 aa).

[2Fe-2S] cluster is bound by residues C3, C6, C18, and C25. Hybrid [4Fe-2O-2S] cluster-binding residues include H252, E276, C320, C408, C436, C461, E495, and K497. At C408 the chain carries Cysteine persulfide.

Belongs to the HCP family. The cofactor is [2Fe-2S] cluster. It depends on hybrid [4Fe-2O-2S] cluster as a cofactor.

The protein localises to the cytoplasm. The enzyme catalyses A + NH4(+) + H2O = hydroxylamine + AH2 + H(+). In terms of biological role, catalyzes the reduction of hydroxylamine to form NH(3) and H(2)O. The sequence is that of Hydroxylamine reductase from Tolumonas auensis (strain DSM 9187 / NBRC 110442 / TA 4).